Reading from the N-terminus, the 867-residue chain is Mitochondrial escape protein 2 (867 aa).

2 disordered regions span residues Met-1–Arg-20 and Arg-44–Gly-66. The N-terminal 41 residues, Met-1–Ala-41, are a transit peptide targeting the mitochondrion. At His-42–Arg-308 the chain is on the mitochondrial matrix side. The span at Ala-48–Thr-59 shows a compositional bias: low complexity. In terms of domain architecture, RRM spans Ser-203–Arg-293. A helical membrane pass occupies residues Ile-309 to Ile-329. Residues Arg-330–Gly-867 lie on the Mitochondrial intermembrane side of the membrane. Over residues Phe-614–Ser-639 the composition is skewed to basic and acidic residues. Residues Phe-614–Pro-647 are disordered. Residues Leu-797 to Met-857 are a coiled coil.

The protein belongs to the YME2 family.

It localises to the mitochondrion inner membrane. Functionally, plays a role in maintaining the mitochondrial genome and in controlling the mtDNA escape. Involved in the regulation of mtDNA nucleotide structure and number. May have a dispensable role in early maturation of pre-rRNA. In Neurospora crassa (strain ATCC 24698 / 74-OR23-1A / CBS 708.71 / DSM 1257 / FGSC 987), this protein is Mitochondrial escape protein 2 (msp-45).